The sequence spans 329 residues: MMKLTKLFLATAISLGVSSAVLAADYDLKFGMNAGTSSNEYKAAEMFAKEVKEKSQGKIEISLYPSSQLGDDRAMLKQLKDGSLDFTFAESARFQLFYPEAAVFALPYVISNYNVAQKALFDTEFGKDLIKKMDKDLGVTLLSQAYNGTRQTTSNRAINSIADMKGLKLRVPNAATNLAYAKYVGASPTPMAFSEVYLALQTNAVDGQENPLAAVQAQKFYEVQKFLAMTNHILNDQLYLVSNETYKELPEDLQKVVKDAAENAAKYHTKLFVDGEKDLVTFFEKQGVKITHPDLVPFKESMKPYYAEFVKQTGQKGESALKQIEAINP.

An N-terminal signal peptide occupies residues 1–23 (MMKLTKLFLATAISLGVSSAVLA). Positions 33, 72, 90, 150, 170, and 210 each coordinate N-acetyl-beta-neuraminate.

This sequence belongs to the bacterial solute-binding protein 7 family. As to quaternary structure, the complex comprises the extracytoplasmic solute receptor protein SiaP, and the fused transmembrane protein SiaT.

It is found in the periplasm. Its function is as follows. Part of the tripartite ATP-independent periplasmic (TRAP) transport system SiaPT involved in the uptake of sialic acid (N-acetyl-beta-neuraminate). This protein specifically binds sialic acid with high affinity. N-Acetylneuraminate (sialic acid) can then be incorporated into the lipooligosaccharides (LOS) as a terminal non-reducing sugar, protecting the bacterium from complement-mediated killing by normal human serum. The protein is Sialic acid-binding periplasmic protein SiaP (siaP) of Haemophilus influenzae (strain ATCC 51907 / DSM 11121 / KW20 / Rd).